Consider the following 664-residue polypeptide: Prelamin-A/C (664 aa).

N-acetylmethionine is present on M1. The interval 1-25 is disordered; sequence METPSQRRATRSGAQASSTPLSPTR. The tract at residues 1-33 is head; the sequence is METPSQRRATRSGAQASSTPLSPTRITRLQEKE. An interaction with MLIP region spans residues 1–130; sequence METPSQRRAT…TKKEGDLIAA (130 aa). T3 is subject to Phosphothreonine. The residue at position 5 (S5) is a Phosphoserine. At T10 the chain carries Phosphothreonine. S12 and S18 each carry phosphoserine. The residue at position 19 (T19) is a Phosphothreonine. The residue at position 22 (S22) is a Phosphoserine; by CDK1. One can recognise an IF rod domain in the interval 31–387; that stretch reads EKEDLQELND…KLLEGEEERL (357 aa). Residue K32 is modified to N6-acetyllysine; alternate. Position 32 is an N6-succinyllysine; alternate (K32). K32 is covalently cross-linked (Glycyl lysine isopeptide (Lys-Gly) (interchain with G-Cter in SUMO2); alternate). The tract at residues 34 to 70 is coil 1A; sequence DLQELNDRLAVYIDRVRSLETENAGLRLRITESEEVV. A phosphoserine mark is found at S51, S66, and S71. The segment at 71-80 is linker 1; that stretch reads SREVSGIKAA. An N6-acetyllysine mark is found at K78 and K97. A coil 1B region spans residues 81 to 218; it reads YEAELGDARK…NIYSEELRET (138 aa). K97 is covalently cross-linked (Glycyl lysine isopeptide (Lys-Gly) (interchain with G-Cter in SUMO2)). Phosphoserine is present on S107. K108, K114, K123, K135, K144, and K155 each carry N6-acetyllysine. K171 is modified (N6-acetyllysine; alternate). K171 is modified (N6-succinyllysine; alternate). K171 participates in a covalent cross-link: Glycyl lysine isopeptide (Lys-Gly) (interchain with G-Cter in SUMO2); alternate. N6-acetyllysine occurs at positions 180, 201, and 208. K201 participates in a covalent cross-link: Glycyl lysine isopeptide (Lys-Gly) (interchain with G-Cter in SUMO2); alternate. A Glycyl lysine isopeptide (Lys-Gly) (interchain with G-Cter in SUMO); alternate cross-link involves residue K201. K208 is covalently cross-linked (Glycyl lysine isopeptide (Lys-Gly) (interchain with G-Cter in SUMO2)). At S212 the chain carries Phosphoserine. Residues K219 and K233 each participate in a glycyl lysine isopeptide (Lys-Gly) (interchain with G-Cter in SUMO2) cross-link. Residues 219–242 form a linker 2 region; that stretch reads KRRHETRLVEIDNGKQREFESRLA. N6-acetyllysine occurs at positions 233, 260, 265, and 270. The interval 243–383 is coil 2; that stretch reads DALQELRAQH…HAYRKLLEGE (141 aa). The tract at residues 259–331 is necessary and sufficient for the interaction with IFFO1; that stretch reads YKKELEKTYS…DLEDSLARER (73 aa). A Glycyl lysine isopeptide (Lys-Gly) (interchain with G-Cter in SUMO2); alternate cross-link involves residue K260. Residue K270 forms a Glycyl lysine isopeptide (Lys-Gly) (interchain with G-Cter in SUMO2); alternate linkage. At S277 the chain carries Phosphoserine. S282 carries the post-translational modification Phosphoserine; by ATR. A phosphoserine mark is found at S301 and S307. K311 is covalently cross-linked (Glycyl lysine isopeptide (Lys-Gly) (interchain with G-Cter in SUMO2); alternate). N6-acetyllysine is present on residues K311, K316, and K341. Glycyl lysine isopeptide (Lys-Gly) (interchain with G-Cter in SUMO2) cross-links involve residues K366 and K378. The disordered stretch occupies residues 384 to 442; that stretch reads EERLRLSPSPTSQRSRGRASSHSSQTQGGGSVTKKRKLESTESRSSFSQHARTSGRVAV. A tail region spans residues 384 to 664; that stretch reads EERLRLSPSP…TQSPQNCSIM (281 aa). Position 390 is a phosphoserine (S390). The residue at position 392 (S392) is a Phosphoserine; by CDK1. Position 395 is a phosphoserine; by ATR (S395). A phosphoserine mark is found at S398, S403, S404, S406, S407, and S414. T416 carries the phosphothreonine modification. K417 is subject to N6-acetyllysine. Glycyl lysine isopeptide (Lys-Gly) (interchain with G-Cter in SUMO2) cross-links involve residues K417 and K420. The Nuclear localization signal motif lies at 417 to 422; the sequence is KKRKLE. A phosphoserine mark is found at S423, S426, S429, and S431. Over residues 426 to 435 the composition is skewed to polar residues; it reads SRSSFSQHAR. The region spanning 428-545 is the LTD domain; sequence SSFSQHARTS…EEVAMRKLVR (118 aa). K450 is covalently cross-linked (Glycyl lysine isopeptide (Lys-Gly) (interchain with G-Cter in SUMO2); alternate). N6-acetyllysine occurs at positions 450 and 457. 2 positions are modified to phosphoserine: S458 and S463. Glycyl lysine isopeptide (Lys-Gly) (interchain with G-Cter in SUMO2) cross-links involve residues K470 and K486. K486 carries the N6-acetyllysine modification. Phosphothreonine occurs at positions 496, 505, and 510. A phosphoserine mark is found at S533 and S546. Position 548 is a phosphothreonine (T548). The interval 552 to 576 is disordered; it reads DDEDEDGDDLLHHHHGSHCSSSGDP. A phosphoserine mark is found at S568 and S571. Residue K597 forms a Glycyl lysine isopeptide (Lys-Gly) (interchain with G-Cter in SUMO2); alternate linkage. K597 participates in a covalent cross-link: Glycyl lysine isopeptide (Lys-Gly) (interchain with G-Cter in SUMO1); alternate. The interval 598-619 is disordered; sequence ASASGSGAQVGGPISSGSSASS. Phosphoserine is present on residues S612, S613, S616, and S619. 2 O-linked (GlcNAc) serine glycosylation sites follow: S625 and S628. S628, S632, S636, and S652 each carry phosphoserine. Positions 647–661 are cleaved as a propeptide — removed in Lamin-A/C form; that stretch reads LLGNSSPRTQSPQNC. A Cysteine methyl ester modification is found at C661. C661 is lipidated: S-farnesyl cysteine. Residues 662–664 constitute a propeptide, removed in Prelamin-A/C form and in Lamin-A/C form; sequence SIM.

The protein belongs to the intermediate filament family. As to quaternary structure, homodimer of lamin A and lamin C. Lamin dimers then assemble into dimeric head-to-tail polymers. Ultimately, two head-to-tail polymers assemble laterally into a protofilament with a uniformly shaped rod of 3.5 nm in diameter. Interacts with lamin-associated polypeptides IA, IB and TMPO-alpha, RB1 and with emerin. Interacts with SREBF1, SREBF2, SUN2 and TMEM43. Interacts with TMEM201. Proteolytically processed isoform A interacts with NARF. Interacts with SUN1. Interacts with MLIP. Interacts with DMPK; may regulate nuclear envelope stability. Interacts with SUV39H1; the interaction increases stability of SUV39H1. Interacts with SYNE2. Interacts with ITSN1 isoform 2. Interacts with IFFO1; enables the formation of an interior nucleoskeleton that is recruited to DNA double-strand breaks. Interacts with EMD. In terms of assembly, interacts (via C-terminus) with LEMD2 (via N-terminus) (in vitro). Proteolytic cleavage of the C-terminal of 18 residues of prelamin-A/C results in the production of lamin-A/C. The prelamin-A/C maturation pathway includes farnesylation of CAAX motif by protein farnesyltransferase (FNTA and FNTB), removal of the last three amino acids (-AAX) by RCE1/FACE2 and/or ZMPSTE24, methylation of the C-terminal cysteine by ICMT and endoproteolytic removal of the last 15 C-terminal amino acids by ZMPSTE24. Proteolytic cleavage requires prior farnesylation and methylation, and absence of these blocks cleavage. Post-translationally, farnesylation of prelamin-A/C facilitates nuclear envelope targeting. In terms of processing, phosphorylation plays a key role in lamin organization, subcellular localization and nuclear envelope disintegration. Phosphorylation by CDK1 at Ser-22 and Ser-392 at the onset of mitosis drives lamin disassembly and nuclear envelope breakdown. Phosphorylation at Ser-22 and Ser-392 during interphase promotes localization to the nucleoplasm and regulates lamina assembly. Phosphorylation at Ser-22, Ser-392 and Ser-628 during interphase causes redistribution between the nucleus and the cytoplasm. Phosphorylation at Ser-22 by CDK1 regulates matrix stiffness. Phosphorylation status of Ser-22 determines its localization between double-strand break (DSB) sites and the nuclear matrix. Phosphorylated by ATR at Ser-282 in response to DNA damage, leading to lamin disassembly and nuclear envelope rupture. Phosphorylation also regulates stability in micronuclei arising from genome instability: phosphorylation at Ser-395 by ATR in response to genome instability and double-stranded DNA breaks primes LMNA for subsequent phosphorylation at Ser-392 by CDK1 and micronuclei envelope rupture. The rupture of micronuclear envelope triggers the cGAS-STING pathway thereby activating the type I interferon response and innate immunity. Acetylation by KAT8 is required for nuclear architecture. Post-translationally, sumoylation is necessary for the localization to the nuclear envelope. In the arteries, prelamin-A/C accumulation is not observed in young healthy vessels but is prevalent in medial vascular smooth muscle cells (VSMCs) from aged individuals and in atherosclerotic lesions, where it often colocalizes with senescent and degenerate VSMCs. Prelamin-A/C expression increases with age and disease. In normal aging, the accumulation of prelamin-A/C is caused in part by the down-regulation of ZMPSTE24/FACE1 in response to oxidative stress.

It localises to the nucleus lamina. The protein localises to the nucleus envelope. It is found in the nucleus. Its subcellular location is the nucleoplasm. The protein resides in the nucleus matrix. It localises to the nucleus speckle. Lamins are intermediate filament proteins that assemble into a filamentous meshwork, and which constitute the major components of the nuclear lamina, a fibrous layer on the nucleoplasmic side of the inner nuclear membrane. Lamins provide a framework for the nuclear envelope, bridging the nuclear envelope and chromatin, thereby playing an important role in nuclear assembly, chromatin organization, nuclear membrane and telomere dynamics. Lamin A and C also regulate matrix stiffness by conferring nuclear mechanical properties. The structural integrity of the lamina is strictly controlled by the cell cycle, as seen by the disintegration and formation of the nuclear envelope in prophase and telophase, respectively. Lamin A and C are present in equal amounts in the lamina of mammals. Also invoved in DNA repair: recruited by DNA repair proteins XRCC4 and IFFO1 to the DNA double-strand breaks (DSBs) to prevent chromosome translocation by immobilizing broken DNA ends. Required for normal development of peripheral nervous system and skeletal muscle and for muscle satellite cell proliferation. Required for osteoblastogenesis and bone formation. Also prevents fat infiltration of muscle and bone marrow, helping to maintain the volume and strength of skeletal muscle and bone. Required for cardiac homeostasis. In terms of biological role, prelamin-A/C can accelerate smooth muscle cell senescence. It acts to disrupt mitosis and induce DNA damage in vascular smooth muscle cells (VSMCs), leading to mitotic failure, genomic instability, and premature senescence. This is Prelamin-A/C (LMNA) from Homo sapiens (Human).